The chain runs to 117 residues: UPF0102 protein FTN_0424 (117 aa).

Belongs to the UPF0102 family.

In Francisella tularensis subsp. novicida (strain U112), this protein is UPF0102 protein FTN_0424.